The primary structure comprises 273 residues: Large ribosomal subunit protein uL2cz/uL2cy (273 aa).

Disordered stretches follow at residues 1–23 (MAIH…SQVK) and 224–273 (NPVD…RRRK). Residues 262 to 273 (KYSDRFILRRRK) are compositionally biased toward basic and acidic residues.

The protein belongs to the universal ribosomal protein uL2 family. Part of the 50S ribosomal subunit.

Its subcellular location is the plastid. The protein localises to the chloroplast. This chain is Large ribosomal subunit protein uL2cz/uL2cy (rpl2-A), found in Acorus calamus var. americanus (American sweet flag).